A 284-amino-acid chain; its full sequence is Type II methyltransferase M1.DpnII (284 aa).

S-adenosyl-L-methionine is bound by residues Trp17, Lys21, Gly46, Asp62, Asp177, Phe178, and Asp194.

It belongs to the N(4)/N(6)-methyltransferase family. In terms of assembly, monomer. Homodimer.

The enzyme catalyses a 2'-deoxyadenosine in DNA + S-adenosyl-L-methionine = an N(6)-methyl-2'-deoxyadenosine in DNA + S-adenosyl-L-homocysteine + H(+). Its function is as follows. An alpha subtype methylase that recognizes the double-stranded sequence 5'-GATC-3', methylates A-2 on both strands, and protects the DNA from cleavage by the DpnII endonuclease. In Streptococcus pneumoniae, this protein is Type II methyltransferase M1.DpnII.